The sequence spans 360 residues: Melanoma-associated antigen B16 (360 aa).

The interval 1 to 118 (MSQKNPEYAA…GNSVIPPDQP (118 aa)) is disordered. The span at 9–19 (AADHDHTREEM) shows a compositional bias: basic and acidic residues. Residues 63 to 98 (CSSSQLLTASNQEDPAYETPSTSRGLQHPYVSSSES) show a composition bias toward polar residues. The MAGE domain occupies 125–324 (IDGKVNFLVN…TVFPSQYEEA (200 aa)). Residues 340-360 (AGPSSASGESSSDMGSNVPHI) are disordered. The segment covering 341 to 360 (GPSSASGESSSDMGSNVPHI) has biased composition (low complexity).

The chain is Melanoma-associated antigen B16 (Mageb16) from Rattus norvegicus (Rat).